A 131-amino-acid chain; its full sequence is Glycine cleavage system H protein (131 aa).

The Lipoyl-binding domain maps to 24-106 (IATIGISAFA…YGEGWLLKLR (83 aa)). Lys-65 bears the N6-lipoyllysine mark.

The protein belongs to the GcvH family. As to quaternary structure, the glycine cleavage system is composed of four proteins: P, T, L and H. (R)-lipoate serves as cofactor.

Functionally, the glycine cleavage system catalyzes the degradation of glycine. The H protein shuttles the methylamine group of glycine from the P protein to the T protein. The polypeptide is Glycine cleavage system H protein (Gloeothece citriformis (strain PCC 7424) (Cyanothece sp. (strain PCC 7424))).